The chain runs to 412 residues: Phosphoglycerate kinase, plasmid (412 aa).

Residues 39 to 41 (DLN), R55, 78 to 81 (HLGR), R133, and R166 each bind substrate. Residues K217, E339, and 365-368 (GGDT) each bind ATP.

Belongs to the phosphoglycerate kinase family. Monomer.

Its subcellular location is the cytoplasm. It catalyses the reaction (2R)-3-phosphoglycerate + ATP = (2R)-3-phospho-glyceroyl phosphate + ADP. It participates in carbohydrate biosynthesis; Calvin cycle. This is Phosphoglycerate kinase, plasmid (cbbKP) from Cupriavidus necator (strain ATCC 17699 / DSM 428 / KCTC 22496 / NCIMB 10442 / H16 / Stanier 337) (Ralstonia eutropha).